A 157-amino-acid chain; its full sequence is UPF0178 protein Nwi_2152 (157 aa).

The protein belongs to the UPF0178 family.

The sequence is that of UPF0178 protein Nwi_2152 from Nitrobacter winogradskyi (strain ATCC 25391 / DSM 10237 / CIP 104748 / NCIMB 11846 / Nb-255).